Reading from the N-terminus, the 100-residue chain is Small ribosomal subunit protein bS20 (100 aa).

Basic residues predominate over residues 1–22 (MASGKPKKKNPRLASGRKRARQ). Residues 1–26 (MASGKPKKKNPRLASGRKRARQGLKL) form a disordered region.

It belongs to the bacterial ribosomal protein bS20 family.

Its function is as follows. Binds directly to 16S ribosomal RNA. In Acidovorax ebreus (strain TPSY) (Diaphorobacter sp. (strain TPSY)), this protein is Small ribosomal subunit protein bS20.